The primary structure comprises 1044 residues: MPGIVVFRRRWSVGSDDLVLPAIFLFLLHTTWFVILSVVLFGLVYNPHEACSLNLVDHGRGYLGILLSCMIAEMAIIWLSMRGGILYTEPRDSMQYVLYVRLAILVIEFIYAIVGIVWLTQYYTSCNDLTAKNVTLGMVVCNWVVILSVCITVLCVFDPTGRTFVKLRATKRRQRNLRTYNLRHRLEEGQATSWSRRLKVFLCCTRTKDSQSDAYSEIAYLFAEFFRDLDIVPSDIIAGLVLLRQRQRAKRNAVLDEANNDILAFLSGMPVTRNTKYLDLKNSHEMLRYKEVCYYMLFALAAYGWPMYLMRKPTCGLCQLARSCSCCLCPARPRFAPGVTIEEDNCCGCNAIAIRRHFLDENMTAVDIVYTSCHDAVYETPFYVAVDHDKKKVVISIRGTLSPKDALTDLTGDAERLPVEGHRGTWLGHKGMVLSAEYIKKKLEQEMVLSQAFGRDLGRGTKHYGLIVVGHSLGAGTAAILSFLLRPQYPTLKCFAYSPPGGLLSEDAMEYSKEFVTAVVLGKDLVPRIGLSQLEGFRRQLLDVLQRSTKPKWRIIVGATKCIPKSELPEDQVEVTTLASTRLWTHPSDLTIALSASTPLYPPGRIIHVVHNHPAEQCCCCEQEEPTYFAIWGDNKAFNEVIISPAMLHEHLPYVVMEGLNKVLENYNKGKTALLSAAKVMVSPTEVDLTPELIFQQQPLPTGPPLPTGLALELPATEHRNSSVRSKSQSEMSLEGFSEGRLLSPVAAASAARQDPVELLLLSTQERLAAELQSRRAPLATMESLSDTESLYSFDSRRSSGFRSIRGSPSLHAVLERDEGHLFYIDPAIPEENPSLSSRTELLAADSLSKHSQDTQPLEAALGSGGVTPERPPSATIEEEEAAGGSEGGGVAPRGELALHNGRLGDSPSPQVLEFAEFIDSLFNLDSKSSSFQDLYCMMVPESPTSDYTEGPKSPSQQEILLRAQFEPNLVPKPPRLFAGSAEPSSGISLSPSFPLSSSGELMDLTPTGLSSQECLATDKIRTSTPTGHGASPTKQDDLVISAR.

The Cytoplasmic portion of the chain corresponds to 1 to 22 (MPGIVVFRRRWSVGSDDLVLPA). A helical transmembrane segment spans residues 23 to 43 (IFLFLLHTTWFVILSVVLFGL). Residues 44-60 (VYNPHEACSLNLVDHGR) lie on the Extracellular side of the membrane. Residues 61–81 (GYLGILLSCMIAEMAIIWLSM) traverse the membrane as a helical segment. Residues 82-101 (RGGILYTEPRDSMQYVLYVR) lie on the Cytoplasmic side of the membrane. Residues 102-122 (LAILVIEFIYAIVGIVWLTQY) form a helical membrane-spanning segment. The Extracellular segment spans residues 123-136 (YTSCNDLTAKNVTL). N-linked (GlcNAc...) asparagine glycosylation occurs at Asn133. The chain crosses the membrane as a helical span at residues 137–157 (GMVVCNWVVILSVCITVLCVF). Residues 158-1044 (DPTGRTFVKL…KQDDLVISAR (887 aa)) lie on the Cytoplasmic side of the membrane. Catalysis depends on charge relay system residues Ser472 and Asp524. Ser728, Ser730, Ser733, Ser744, Ser784, Ser786, Ser808, Ser810, Ser835, Ser849, and Ser954 each carry phosphoserine. A disordered region spans residues 848–897 (LSKHSQDTQPLEAALGSGGVTPERPPSATIEEEEAAGGSEGGGVAPRGEL). The tract at residues 1013–1044 (QECLATDKIRTSTPTGHGASPTKQDDLVISAR) is disordered. Thr1025 is subject to Phosphothreonine.

Belongs to the AB hydrolase superfamily. Lipase family. Interacts (via C-terminal) with CAMK2A; leading to the phosphorylation and inhibition of DAGLA enzymatic activity. Interacts (via PPXXF motif) with HOMER1 and HOMER2; this interaction is required for DAGLA membrane localization. Ca(2+) serves as cofactor. In terms of processing, phosphorylated at Ser-784 and Ser-810 by CAMK2A; phosphorylation by CAMK2A inhibits diacylglycerol lipase activity. Highly expressed by principal cells in the hippocampus. In embryonic brains, it is present in axonal tracts, while in adults it localizes to dendritic fields, correlating with the developmental change in requirement for 2-AG synthesis from the pre- to the postsynaptic compartment. Concentrated in heads of dendritic spines throughout the hippocampal formation. Highly compartmentalized into a wide perisynaptic annulus around the postsynaptic density of axospinous contacts but not intrasynaptically (at protein level).

It is found in the cell membrane. The protein localises to the cell projection. It localises to the dendritic spine membrane. The protein resides in the postsynaptic density membrane. Its subcellular location is the early endosome membrane. The enzyme catalyses a 1,2-diacyl-sn-glycerol + H2O = a 2-acylglycerol + a fatty acid + H(+). It catalyses the reaction 1-octadecanoyl-2-(5Z,8Z,11Z,14Z-eicosatetraenoyl)-sn-glycerol + H2O = 2-(5Z,8Z,11Z,14Z-eicosatetraenoyl)-glycerol + octadecanoate + H(+). The catalysed reaction is 1,2-di-(9Z-octadecenoyl)-sn-glycerol + H2O = 2-(9Z-octadecenoyl)-glycerol + (9Z)-octadecenoate + H(+). It carries out the reaction 1-(9Z-octadecenoyl)-2-(5Z,8Z,11Z,14Z-eicosatetraenoyl)-sn-glycerol + H2O = 2-(5Z,8Z,11Z,14Z-eicosatetraenoyl)-glycerol + (9Z)-octadecenoate + H(+). The enzyme catalyses 1-(9Z-octadecenoyl)-2-octadecanoyl-sn-glycerol + H2O = 2-octadecanoylglycerol + (9Z)-octadecenoate + H(+). It catalyses the reaction 1-(9Z-octadecenoyl)-2-(9Z,12Z-octadecadienoyl)-sn-glycerol + H2O = 2-(9Z,12Z-octadecadienoyl)-glycerol + (9Z)-octadecenoate + H(+). The catalysed reaction is 1-(9Z-octadecenoyl)-2-O-(5Z,8Z,11Z,14Z-eicosatetraenyl)-sn-glycerol + H2O = 2-O-(5Z,8Z,11Z,14Z)-eicosatetraenylglycerol + (9Z)-octadecenoate + H(+). Inhibited by 1,2,3-triazole urea covalent inhibitor KT172, DH376 and DO34. Inhibited by p-hydroxy-mercuri-benzoate and HgCl(2), but not to PMSF. Also inhibited by RHC80267. Diacylglycerol lipase activity is inhibited by the phosphorylation of Ser-784 and Ser-810 by CAMK2A. In terms of biological role, serine hydrolase that hydrolyzes arachidonic acid-esterified diacylglycerols (DAGs) to produce the principal endocannabinoid (eCB), 2-arachidonoylglycerol (2-AG). Preferentially hydrolyzes sn-1 fatty acids from diacylglycerols (DAG) that contain arachidonic acid (AA) esterified at the sn-2 position to biosynthesize 2-AG. Has negligible activity against other lipids including monoacylglycerols and phospholipids. Plays a key role in regulating 2-AG signaling in the central nervous system (CNS). Controls the activity of 2-AG as a retrograde messenger at neuronal synapses. Supports axonal growth during development and adult neurogenesis. Plays a role for eCB signaling in the physiological regulation of anxiety and depressive behaviors. Also regulates neuroinflammatory responses in the brain, in particular, LPS-induced microglial activation. This Mus musculus (Mouse) protein is Diacylglycerol lipase-alpha (Dagla).